A 292-amino-acid polypeptide reads, in one-letter code: ATP synthase gamma chain (292 aa).

This sequence belongs to the ATPase gamma chain family. In terms of assembly, F-type ATPases have 2 components, CF(1) - the catalytic core - and CF(0) - the membrane proton channel. CF(1) has five subunits: alpha(3), beta(3), gamma(1), delta(1), epsilon(1). CF(0) has three main subunits: a, b and c.

It localises to the cell membrane. In terms of biological role, produces ATP from ADP in the presence of a proton gradient across the membrane. The gamma chain is believed to be important in regulating ATPase activity and the flow of protons through the CF(0) complex. The chain is ATP synthase gamma chain from Streptococcus pneumoniae (strain JJA).